We begin with the raw amino-acid sequence, 260 residues long: Arginine esterase (260 aa).

The first 17 residues, 1–17 (MWFLALCLAMSLGWTGA), serve as a signal peptide directing secretion. The propeptide at 18-24 (EPHFQPR) is activation peptide. The 233-residue stretch at 25–257 (IIGGRECLKN…HLMWIKDTMK (233 aa)) folds into the Peptidase S1 domain. Cystine bridges form between C31/C172, C50/C66, C151/C218, C183/C197, and C208/C233. The active-site Charge relay system is the H65. N79 carries N-linked (GlcNAc...) asparagine glycosylation. Catalysis depends on D119, which acts as the Charge relay system. The active-site Charge relay system is S212.

This sequence belongs to the peptidase S1 family. Kallikrein subfamily.

It carries out the reaction Preferential cleavage of Arg-|-Xaa bonds in small molecule substrates. Highly selective action to release kallidin (lysyl-bradykinin) from kininogen involves hydrolysis of Met-|-Xaa or Leu-|-Xaa.. Its function is as follows. This serine protease is found in dog seminal plasma, its exact physiological function is not known. This chain is Arginine esterase, found in Canis lupus familiaris (Dog).